Here is a 184-residue protein sequence, read N- to C-terminus: Effector CFEM1 (184 aa).

An N-terminal signal peptide occupies residues 1 to 17; it reads MKYSVAFVALAAVAAQA. Positions 18 to 112 constitute a CFEM domain; that stretch reads QSLADVPKCA…PTTTAAATST (95 aa). Intrachain disulfides connect C26/C68, C30/C63, C41/C48, and C50/C85. D45 serves as a coordination point for heme. Disordered stretches follow at residues 83–106 and 136–163; these read NLCKNPPKESEAKSTAEEEKPTTT and IIPTTAAEEPATSTPAAATPTKGPEQAN. The segment covering 88–103 has biased composition (basic and acidic residues); the sequence is PPKESEAKSTAEEEKP. N163 carries GPI-anchor amidated asparagine lipidation. Positions 164–184 are cleaved as a propeptide — removed in mature form; sequence GAAGLKGLGALAMAAFAALAL.

The protein belongs to the RBT5 family. In terms of assembly, interacts with Z.mays LRR5; the interaction is direct. Interacts (via CFEM domain) with Z.mays WAK17 isoform 2; the interaction is direct.

It is found in the secreted. The protein resides in the cell wall. The protein localises to the cell membrane. It localises to the cell septum. Its subcellular location is the cytoplasm. In terms of biological role, suppresses host programmed cell death during infection by binding to Z.mays WAK17 isoform 2 and Z.mays LRR5, to prevent activation of Z.mays WAK17 isoform 1 and the downstream hypersensitive response. The polypeptide is Effector CFEM1 (Gibberella zeae (strain ATCC MYA-4620 / CBS 123657 / FGSC 9075 / NRRL 31084 / PH-1) (Wheat head blight fungus)).